The sequence spans 338 residues: Tryptophan--tRNA ligase (338 aa).

ATP contacts are provided by residues 11 to 13 and 19 to 20; these read QPS and GN. The short motif at 12–20 is the 'HIGH' region element; that stretch reads PSGELSIGN. An L-tryptophan-binding site is contributed by D135. Residues 147–149, V189, and 198–202 contribute to the ATP site; these read GSD and KMSKS. The short motif at 198-202 is the 'KMSKS' region element; sequence KMSKS.

Belongs to the class-I aminoacyl-tRNA synthetase family. In terms of assembly, homodimer.

It is found in the cytoplasm. It carries out the reaction tRNA(Trp) + L-tryptophan + ATP = L-tryptophyl-tRNA(Trp) + AMP + diphosphate + H(+). In terms of biological role, catalyzes the attachment of tryptophan to tRNA(Trp). In Vibrio vulnificus (strain YJ016), this protein is Tryptophan--tRNA ligase.